Here is a 346-residue protein sequence, read N- to C-terminus: tRNA N6-adenosine threonylcarbamoyltransferase (346 aa).

2 residues coordinate Fe cation: H110 and H114. Substrate contacts are provided by residues 132–136, D165, G178, and N274; that span reads LLSGG. Residue D298 coordinates Fe cation.

Belongs to the KAE1 / TsaD family. The cofactor is Fe(2+).

The protein resides in the cytoplasm. The catalysed reaction is L-threonylcarbamoyladenylate + adenosine(37) in tRNA = N(6)-L-threonylcarbamoyladenosine(37) in tRNA + AMP + H(+). In terms of biological role, required for the formation of a threonylcarbamoyl group on adenosine at position 37 (t(6)A37) in tRNAs that read codons beginning with adenine. Is involved in the transfer of the threonylcarbamoyl moiety of threonylcarbamoyl-AMP (TC-AMP) to the N6 group of A37, together with TsaE and TsaB. TsaD likely plays a direct catalytic role in this reaction. In Borreliella burgdorferi (strain ZS7) (Borrelia burgdorferi), this protein is tRNA N6-adenosine threonylcarbamoyltransferase.